An 88-amino-acid polypeptide reads, in one-letter code: MKTALPLLLLTCLVAAVQSTGSQGCPTYVSEKCTARLQECSNNQQQEPLQNCTAVHADCVVQATEDCQREQSQLNHDHLNNHTTTQQP.

Positions 1 to 19 (MKTALPLLLLTCLVAAVQS) are cleaved as a signal peptide. 3 disulfides stabilise this stretch: C25-C33, C40-C52, and C59-C67. The propeptide occupies 69-88 (REQSQLNHDHLNNHTTTQQP).

As to quaternary structure, binds to attractin and temptin.

It is found in the secreted. Functionally, a component of the complex of water-borne protein pheromones that stimulates attraction and mating behavior. The sequence is that of Enticin from Aplysia californica (California sea hare).